Here is a 379-residue protein sequence, read N- to C-terminus: Stimulator of interferon genes protein (379 aa).

Residues M1 to R17 lie on the Cytoplasmic side of the membrane. Residues M1–L190 form a mediates interaction with ZDHHC1 and ZDHHC11 region. A helical membrane pass occupies residues F18–W34. The Lumenal portion of the chain corresponds to M35–L44. Residues H45 to E69 traverse the membrane as a helical segment. Topologically, residues L70–S91 are cytoplasmic. C88 carries the S-palmitoyl cysteine lipid modification. Residues P92–Y106 form a helical membrane-spanning segment. Over C107–R116 the chain is Lumenal. Residues L117–L134 form a helical membrane-spanning segment. Topologically, residues D135 to I379 are cytoplasmic. Residue K151 forms a Glycyl lysine isopeptide (Lys-Gly) (interchain with G-Cter in ubiquitin) linkage. The cyclic dinucleotide-binding domain (CBD) stretch occupies residues F153–E340. S162–Y167 serves as a coordination point for 2',3'-cGAMP. 3',3'-c-di-GMP is bound at residue G166. Y167 serves as a coordination point for 2',3'-cUAMP. K236 is covalently cross-linked (Glycyl lysine isopeptide (Lys-Gly) (interchain with G-Cter in ubiquitin)). R238 contacts 2',3'-cUAMP. 2',3'-cGAMP-binding positions include R238–S241 and T263. Residues R238–S241 and T263 each bind 3',3'-c-di-GMP. Phosphoserine is present on S241. A 2',3'-cUAMP-binding site is contributed by T263. K338 is covalently cross-linked (Glycyl lysine isopeptide (Lys-Gly) (interchain with G-Cter in SUMO)). Residues E340–I379 form a C-terminal tail (CTT) region. S355 is modified (phosphoserine). S358 and S366 each carry phosphoserine; by TBK1. The pLxIS motif signature appears at L363 to S366.

The protein belongs to the STING family. As to quaternary structure, homodimer; forms a homodimer in absence of cyclic nucleotide (c-di-GMP or cGAMP); 'Lys-63'-linked ubiquitination at Lys-151 is required for homodimerization. Homotetramer; in presence of cyclic nucleotide (c-di-GMP or cGAMP), forms tetramers and higher-order oligomers through side-by-side packing. Interacts (when phosphorylated) with IRF3; following activation and phosphorylation on the pLxIS motif by TBK1, recruits IRF3. Interacts with RIGI, MAVS and SSR2. Interacts with RNF5 and TRIM56. Interacts with TBK1; when homodimer, leading to subsequent production of IFN-beta. Interacts with IFIT1 and IFIT2. Interacts with TRIM29; this interaction induces STING1 ubiquitination and subsequent degradation. Associates with the MHC-II complex. Interacts with STEEP1; interaction takes place upon cGAMP-activation and STING1 phosphorylation by MAP3K7/TAK1 and promotes STING1 translocation to COPII vesicles. Interacts with SEC24A, SEC24B and SEC24C; promoting translocation to COPII vesicles. Interacts (when ubiquitinated) with SQSTM1; leading to relocalization to autophagosomes. Interacts with SURF4. Interacts with HNRNPA2B1. Interacts with ZDHHC1; ZDHHC1 constitutively interacts with STING1 and in presence of DNA viruses activates it by promoting its cGAMP-induced oligomerization and the recruitment of downstream signaling components. Interacts with ZDHHC11; in presence of DNA viruses promotes the recruitment of IRF3 to STING1. Interacts with TOMM70. Interacts with TAB1; promoting recruitment of TAB1 to the endoplasmic reticulum membrane and subsequent activation of MAP3K7/TAK1. Interacts (via transmembrane domain) with TMEM203. Interacts with DDX41. In terms of processing, phosphorylation by TBK1 leads to activation and production of IFN-beta. Following cyclic nucleotide (c-di-GMP or cGAMP)-binding, activation and translocation from the endoplasmic reticulum, STING1 is phosphorylated by TBK1 at Ser-366 in the pLxIS motif. The phosphorylated pLxIS motif constitutes an IRF3-binding motif, leading to recruitment of the transcription factor IRF3 to induce type-I interferons and other cytokines. Phosphorylated on tyrosine residues upon MHC-II aggregation. Dephosphorylation by PPP6C leads to inactivation and decreased production of IFN-beta. Phosphorylation at Ser-358 is also required to activate IRF3. Phosphorylation at Ser-355 by MAP3K7/TAK1 facilitates its interaction with STEEP1, promoting STING1 translocation to COPII vesicles. Post-translationally, ubiquitinated. Ubiquitinated via 'Lys-63'-linked ubiquitin chains in response to double-stranded DNA treatment, leading to relocalization to autophagosomes and subsequent degradation; this process is dependent on SQSTM1. 'Lys-63'-linked ubiquitination mediated by TRIM56 at Lys-151 promotes homodimerization and recruitment of the antiviral kinase TBK1 and subsequent production of IFN-beta. 'Lys-48'-linked polyubiquitination at Lys-151 occurring after viral infection is mediated by RNF5 and leads to proteasomal degradation. 'Lys-11'-linked polyubiquitination at Lys-151 by RNF26 leads to stabilize STING1: it protects STING1 from RNF5-mediated 'Lys-48'-linked polyubiquitination. 'Lys-33'-linked and 'Lys-48'-linked deubiquitinated by USP20; leading to its stabilization and promotion of innate antiviral response. 'Lys-48'-linked deubiquitinated by USP44; leading to its stabilization and promotion of innate antiviral response. Deubiquitinated by USP13; leading to inhibition of innate antiviral response. 'Lys-63'-linked deubiquitinated by USP49; leading to inhibition of the subsequent recruitment of TBK1 to the signaling complex. 'Lys-63'-linked ubiquitination mediated by RNF39 promotes the activation of the cGAS-STING pathway. Sumoylated at Lys-338 by TRIM38 during the early phase of viral infection, promoting its stability by preventing its relocalization to autophagosomes and subsequent degradation. Desumoylated by SENP2 during the late phase of viral infection. In terms of processing, palmitoylation takes place in the Golgi apparatus and creates a platform for the recruitment of TBK1.

The protein resides in the endoplasmic reticulum membrane. Its subcellular location is the cytoplasm. The protein localises to the perinuclear region. It localises to the endoplasmic reticulum-Golgi intermediate compartment membrane. It is found in the golgi apparatus membrane. The protein resides in the cytoplasmic vesicle. Its subcellular location is the autophagosome membrane. The protein localises to the mitochondrion outer membrane. It localises to the cell membrane. The catalysed reaction is H(+)(in) = H(+)(out). With respect to regulation, in contrast to mouse protein, not activated by anticancer molecule 5,6-dimethylxanthenone 4-acetic acid (DMXAA). In terms of biological role, facilitator of innate immune signaling that acts as a sensor of cytosolic DNA from bacteria and viruses and promotes the production of type I interferon (IFN-alpha and IFN-beta). Innate immune response is triggered in response to non-CpG double-stranded DNA from viruses and bacteria delivered to the cytoplasm. Acts by binding cyclic dinucleotides: recognizes and binds cyclic di-GMP (c-di-GMP), a second messenger produced by bacteria, cyclic UMP-AMP (2',3'-cUAMP), and cyclic GMP-AMP (cGAMP), a messenger produced by CGAS in response to DNA virus in the cytosol. Upon binding to c-di-GMP, cUAMP or cGAMP, STING1 oligomerizes, translocates from the endoplasmic reticulum and is phosphorylated by TBK1 on the pLxIS motif, leading to recruitment and subsequent activation of the transcription factor IRF3 to induce expression of type I interferon and exert a potent anti-viral state. Exhibits 2',3' phosphodiester linkage-specific ligand recognition: can bind both 2'-3' linked cGAMP (2'-3'-cGAMP) and 3'-3' linked cGAMP but is preferentially activated by 2'-3' linked cGAMP. The preference for 2'-3'-cGAMP, compared to other linkage isomers is probably due to the ligand itself, whichs adopts an organized free-ligand conformation that resembles the STING1-bound conformation and pays low energy costs in changing into the active conformation. In addition to promote the production of type I interferons, plays a direct role in autophagy. Following cGAMP-binding, STING1 buds from the endoplasmic reticulum into COPII vesicles, which then form the endoplasmic reticulum-Golgi intermediate compartment (ERGIC). The ERGIC serves as the membrane source for WIPI2 recruitment and LC3 lipidation, leading to formation of autophagosomes that target cytosolic DNA or DNA viruses for degradation by the lysosome. Promotes autophagy by acting as a proton channel that directs proton efflux from the Golgi to facilitate MAP1LC3B/LC3B lipidation. The autophagy- and interferon-inducing activities can be uncoupled and autophagy induction is independent of TBK1 phosphorylation. Autophagy is also triggered upon infection by bacteria: following c-di-GMP-binding, which is produced by live Gram-positive bacteria, promotes reticulophagy. May be involved in translocon function, the translocon possibly being able to influence the induction of type I interferons. May be involved in transduction of apoptotic signals via its association with the major histocompatibility complex class II (MHC-II). The chain is Stimulator of interferon genes protein from Rattus norvegicus (Rat).